Here is a 368-residue protein sequence, read N- to C-terminus: Peptide chain release factor 2 (368 aa).

Gln-248 bears the N5-methylglutamine mark.

The protein belongs to the prokaryotic/mitochondrial release factor family. Methylated by PrmC. Methylation increases the termination efficiency of RF2.

It is found in the cytoplasm. Its function is as follows. Peptide chain release factor 2 directs the termination of translation in response to the peptide chain termination codons UGA and UAA. The chain is Peptide chain release factor 2 from Corynebacterium glutamicum (strain R).